The sequence spans 604 residues: Arginine--tRNA ligase (604 aa).

The 'HIGH' region motif lies at 142–152 (PNIAKEMHVGH).

This sequence belongs to the class-I aminoacyl-tRNA synthetase family. Monomer.

The protein resides in the cytoplasm. It catalyses the reaction tRNA(Arg) + L-arginine + ATP = L-arginyl-tRNA(Arg) + AMP + diphosphate. The sequence is that of Arginine--tRNA ligase from Prochlorococcus marinus (strain MIT 9312).